Consider the following 348-residue polypeptide: Aspartate carbamoyltransferase catalytic subunit (348 aa).

2 residues coordinate carbamoyl phosphate: arginine 57 and threonine 58. Lysine 86 contacts L-aspartate. Arginine 107, histidine 135, and glutamine 138 together coordinate carbamoyl phosphate. Residues arginine 172 and arginine 234 each coordinate L-aspartate. Carbamoyl phosphate is bound by residues leucine 274 and proline 275.

This sequence belongs to the aspartate/ornithine carbamoyltransferase superfamily. ATCase family. In terms of assembly, heterododecamer (2C3:3R2) of six catalytic PyrB chains organized as two trimers (C3), and six regulatory PyrI chains organized as three dimers (R2).

The enzyme catalyses carbamoyl phosphate + L-aspartate = N-carbamoyl-L-aspartate + phosphate + H(+). The protein operates within pyrimidine metabolism; UMP biosynthesis via de novo pathway; (S)-dihydroorotate from bicarbonate: step 2/3. Catalyzes the condensation of carbamoyl phosphate and aspartate to form carbamoyl aspartate and inorganic phosphate, the committed step in the de novo pyrimidine nucleotide biosynthesis pathway. The protein is Aspartate carbamoyltransferase catalytic subunit of Dichelobacter nodosus (strain VCS1703A).